A 212-amino-acid polypeptide reads, in one-letter code: MFAEYGVLNYWTYLVGAIFIVLVPGPNTLFVLKNSVSSGMKGGYLAACGVFIGDAVLMFLAWAGVATLIKTTPILFNIVRYLGAFYLLYLGSKILYATLKGKNSETKSDEPQYGAIFKRALILSLTNPKAILFYVSFFVQFIDVNAPHTGISFFILATTLELVSFCYLSFLIISGAFVTQYIRTKKKLAKVGNSLIGLMFVGFAARLATLQS.

6 consecutive transmembrane segments (helical) span residues T12–L32, G49–I69, T71–G91, I122–I142, F153–I173, and L188–A208.

The protein belongs to the Rht family.

It localises to the cell inner membrane. The enzyme catalyses L-leucine(in) + H(+)(out) = L-leucine(out) + H(+)(in). In terms of biological role, exporter of leucine. The chain is Leucine efflux protein (leuE) from Escherichia coli O6:K15:H31 (strain 536 / UPEC).